A 397-amino-acid chain; its full sequence is MSDDEEYTSSEEEEVVEETREETKPPQTPAEGEGDPEFIKRQDQKRSDLDDQLKEYITEWRKQRSKEEDELKKLKEKQAKRKVTRAEEEQKMAQRKKEEEERRVREAEEKKQREIEEKRMRLEEAEKKRQAMLQAMKDKDKKGPNFTIAKKDAGVLGLSSAAMERNKTKEQLEEEKKISLSFRIKPLAIEGFGEAKLREKAQELWELIVKLETEKYDLEERQKRQDYDLKELKERQKQQLRHKALKKGLDPEALTGKYPPKIQVASKYERRVDTRSYDDKKKLFEGGWDEISKDSNEKIWNEKKEQYTGRQKSKLPKWFGERPGKKAGEPETPEGEEDAKADEDIVEDDEEVEEEVVEEEDEEAEEDEEEEEEEEEEEEEEEEEEEEEEEEEEEEEE.

The span at 1-16 (MSDDEEYTSSEEEEVV) shows a compositional bias: acidic residues. Disordered stretches follow at residues 1-148 (MSDD…NFTI), 234-261 (ERQKQQLRHKALKKGLDPEALTGKYPPK), and 294-397 (DSNE…EEEE). Basic and acidic residues-rich tracts occupy residues 37 to 77 (EFIK…LKEK), 84 to 129 (TRAE…EKKR), and 136 to 148 (MKDKDKKGPNFTI). Composition is skewed to basic and acidic residues over residues 294–307 (DSNEKIWNEKKEQY) and 319–329 (FGERPGKKAGE). Positions 331–397 (ETPEGEEDAK…EEEEEEEEEE (67 aa)) are enriched in acidic residues.

The protein belongs to the troponin T family. Post-translationally, some glutamate residues are polyglycylated by TTLL3B. This modification occurs exclusively on glutamate residues and results in polyglycine chains on the gamma-carboxyl group. As to expression, isoform 3 is expressed in the hypoderm. Isoform 8 is expressed in the dorsal vessel. Isoform 6 is expressed in adult TDT muscle and isoform 9 in adult IFM, flight and jump muscles.

In terms of biological role, troponin T is the tropomyosin-binding subunit of troponin, the thin filament regulatory complex which confers calcium-sensitivity to striated muscle actomyosin ATPase activity. This Drosophila melanogaster (Fruit fly) protein is Troponin T, skeletal muscle (up).